A 456-amino-acid polypeptide reads, in one-letter code: Probable glycine dehydrogenase (decarboxylating) subunit 1 (456 aa).

This sequence belongs to the GcvP family. N-terminal subunit subfamily. As to quaternary structure, the glycine cleavage system is composed of four proteins: P, T, L and H. In this organism, the P 'protein' is a heterodimer of two subunits.

The enzyme catalyses N(6)-[(R)-lipoyl]-L-lysyl-[glycine-cleavage complex H protein] + glycine + H(+) = N(6)-[(R)-S(8)-aminomethyldihydrolipoyl]-L-lysyl-[glycine-cleavage complex H protein] + CO2. In terms of biological role, the glycine cleavage system catalyzes the degradation of glycine. The P protein binds the alpha-amino group of glycine through its pyridoxal phosphate cofactor; CO(2) is released and the remaining methylamine moiety is then transferred to the lipoamide cofactor of the H protein. In Legionella pneumophila (strain Paris), this protein is Probable glycine dehydrogenase (decarboxylating) subunit 1.